The following is a 94-amino-acid chain: Ribonuclease VapC3 (94 aa).

Residue Asp6 coordinates Mg(2+).

The protein belongs to the PINc/VapC protein family. Requires Mg(2+) as cofactor.

In terms of biological role, toxic component of a type II toxin-antitoxin (TA) system. An RNase. Its cognate antitoxin is VapB3. This chain is Ribonuclease VapC3 (vapC3), found in Methanocaldococcus jannaschii (strain ATCC 43067 / DSM 2661 / JAL-1 / JCM 10045 / NBRC 100440) (Methanococcus jannaschii).